A 621-amino-acid polypeptide reads, in one-letter code: Altered inheritance of mitochondria protein 9, mitochondrial (621 aa).

A mitochondrion-targeting transit peptide spans 1–40 (MIRSTTAKLGKRCATLRVRASPILRPLVATRCITNKADEV).

It belongs to the AIM9 family.

It is found in the mitochondrion. This is Altered inheritance of mitochondria protein 9, mitochondrial (AIM9) from Zygosaccharomyces rouxii (strain ATCC 2623 / CBS 732 / NBRC 1130 / NCYC 568 / NRRL Y-229).